We begin with the raw amino-acid sequence, 312 residues long: tRNA uridine(34) hydroxylase (312 aa).

One can recognise a Rhodanese domain in the interval 147–237 (SDRNVIFIDM…GILGYVHDAN (91 aa)). Residue Cys-201 is the Cysteine persulfide intermediate of the active site.

This sequence belongs to the TrhO family.

It catalyses the reaction uridine(34) in tRNA + AH2 + O2 = 5-hydroxyuridine(34) in tRNA + A + H2O. In terms of biological role, catalyzes oxygen-dependent 5-hydroxyuridine (ho5U) modification at position 34 in tRNAs. The chain is tRNA uridine(34) hydroxylase from Buchnera aphidicola subsp. Schizaphis graminum (strain Sg).